The following is a 502-amino-acid chain: 4-hydroxy-3-methylbut-2-enyl diphosphate reductase, chloroplastic (502 aa).

A chloroplast-targeting transit peptide spans 1-48 (MQVLPQTRVQGVPSGRNLSCSKAVGGTPLRALTRDVVRPARSVNVHVV). Cysteine 140 serves as a coordination point for [4Fe-4S] cluster. Residue histidine 170 coordinates (2E)-4-hydroxy-3-methylbut-2-enyl diphosphate. Cysteine 232 provides a ligand contact to [4Fe-4S] cluster. Histidine 260 is a binding site for (2E)-4-hydroxy-3-methylbut-2-enyl diphosphate. Glutamate 262 functions as the Proton donor in the catalytic mechanism. Threonine 325 lines the (2E)-4-hydroxy-3-methylbut-2-enyl diphosphate pocket. Cysteine 363 contributes to the [4Fe-4S] cluster binding site. Residues 398–400 (SSN) and serine 461 contribute to the (2E)-4-hydroxy-3-methylbut-2-enyl diphosphate site.

This sequence belongs to the IspH family. In terms of assembly, homodimer. [4Fe-4S] cluster serves as cofactor.

Its subcellular location is the plastid. The protein localises to the chloroplast stroma. It catalyses the reaction dimethylallyl diphosphate + 2 oxidized [2Fe-2S]-[ferredoxin] + H2O = (2E)-4-hydroxy-3-methylbut-2-enyl diphosphate + 2 reduced [2Fe-2S]-[ferredoxin] + 2 H(+). It carries out the reaction isopentenyl diphosphate + 2 oxidized [2Fe-2S]-[ferredoxin] + H2O = (2E)-4-hydroxy-3-methylbut-2-enyl diphosphate + 2 reduced [2Fe-2S]-[ferredoxin] + 2 H(+). It functions in the pathway isoprenoid biosynthesis; dimethylallyl diphosphate biosynthesis; dimethylallyl diphosphate from (2E)-4-hydroxy-3-methylbutenyl diphosphate: step 1/1. It participates in isoprenoid biosynthesis; isopentenyl diphosphate biosynthesis via DXP pathway; isopentenyl diphosphate from 1-deoxy-D-xylulose 5-phosphate: step 6/6. In terms of biological role, enzyme of the plastid non-mevalonate pathway for isoprenoid biosynthesis that converts 1-hydroxy-2-methyl-2-(E)-butenyl 4-diphosphate into isopentenyl diphosphate (IPP) and dimethylallyl diphosphate (DMAPP). In Botryococcus braunii (Green alga), this protein is 4-hydroxy-3-methylbut-2-enyl diphosphate reductase, chloroplastic.